Reading from the N-terminus, the 632-residue chain is Cell pattern formation-associated protein stuA (632 aa).

A compositionally biased stretch (polar residues) spans 1–20; sequence MNQTQSYMDVHTSHFSSPQP. Positions 1–27 are disordered; the sequence is MNQTQSYMDVHTSHFSSPQPYGSHGAT. One can recognise an HTH APSES-type domain in the interval 128-234; sequence RVTATLWEDE…HNIGGLLYHP (107 aa). A DNA-binding region (H-T-H motif) is located at residues 162-183; the sequence is GTKLLNVAGMTRGRRDGILKSE. Disordered regions lie at residues 246–315, 340–386, 403–460, and 473–632; these read DSQQ…ASSL, QNVP…KSYY, AHSL…QQEP, and NRNS…MRRR. Composition is skewed to polar residues over residues 254-264, 275-295, 340-354, and 364-376; these read GSQTARTSQGP, MNGS…QTNG, QNVP…TRSM, and GNNL…YQNQ. Residues 377 to 386 show a composition bias toward low complexity; that stretch reads PAYDSSKSYY. Basic and acidic residues predominate over residues 428–438; that stretch reads EQEHDEVKVDR. Over residues 473-506 the composition is skewed to polar residues; sequence NRNSYTYTTNPSVSSLSGDHSQLGGSPSHQNGSD. Residues 558–576 show a composition bias toward low complexity; it reads AYASNYSGYSSVNGSSMGS. Residues 578 to 604 form a nuclear localization domain region; it reads KRMRDDDDDHLSRSDGRENEYETKRRK. Residues 579–600 are compositionally biased toward basic and acidic residues; the sequence is RMRDDDDDHLSRSDGRENEYET.

It belongs to the EFG1/PHD1/stuA family.

The protein localises to the nucleus. Its function is as follows. Transcription factor that regulates asexual reproduction. Binds the StuA-response elements (StRE) with the consensus sequence 5'-(A/T)CGCG(T/A)N(A/C)-3' at the promoters of target genes. Required for accurate spatial organization of the developing conidiophore. Primarily involved in the formation of the uninucleate sterigmata, which arise by budding in this multicellular structure. Required for metula and phialide formation during conidiation but is not required for dimorphic growth. The sequence is that of Cell pattern formation-associated protein stuA from Talaromyces marneffei (Penicillium marneffei).